The primary structure comprises 179 residues: Large ribosomal subunit protein uL5 (179 aa).

The protein belongs to the universal ribosomal protein uL5 family. As to quaternary structure, part of the 50S ribosomal subunit; part of the 5S rRNA/L5/L18/L25 subcomplex. Contacts the 5S rRNA and the P site tRNA. Forms a bridge to the 30S subunit in the 70S ribosome.

In terms of biological role, this is one of the proteins that bind and probably mediate the attachment of the 5S RNA into the large ribosomal subunit, where it forms part of the central protuberance. In the 70S ribosome it contacts protein S13 of the 30S subunit (bridge B1b), connecting the 2 subunits; this bridge is implicated in subunit movement. Contacts the P site tRNA; the 5S rRNA and some of its associated proteins might help stabilize positioning of ribosome-bound tRNAs. In Prochlorococcus marinus (strain MIT 9313), this protein is Large ribosomal subunit protein uL5.